Consider the following 364-residue polypeptide: Chorismate synthase (364 aa).

Arginine 47 lines the NADP(+) pocket. Residues 125 to 127 (RFS), glycine 285, 300 to 304 (KPTPS), and arginine 327 each bind FMN.

The protein belongs to the chorismate synthase family. As to quaternary structure, homotetramer. Requires FMNH2 as cofactor.

It carries out the reaction 5-O-(1-carboxyvinyl)-3-phosphoshikimate = chorismate + phosphate. The protein operates within metabolic intermediate biosynthesis; chorismate biosynthesis; chorismate from D-erythrose 4-phosphate and phosphoenolpyruvate: step 7/7. Catalyzes the anti-1,4-elimination of the C-3 phosphate and the C-6 proR hydrogen from 5-enolpyruvylshikimate-3-phosphate (EPSP) to yield chorismate, which is the branch point compound that serves as the starting substrate for the three terminal pathways of aromatic amino acid biosynthesis. This reaction introduces a second double bond into the aromatic ring system. The protein is Chorismate synthase of Dehalococcoides mccartyi (strain ATCC BAA-2266 / KCTC 15142 / 195) (Dehalococcoides ethenogenes (strain 195)).